Consider the following 452-residue polypeptide: CUGBP Elav-like family member 3 (452 aa).

RRM domains follow at residues I7–S88, R94–T174, and C367–P445.

Belongs to the CELF/BRUNOL family.

Its subcellular location is the nucleus. It is found in the cytoplasm. RNA-binding protein that may be involved in the regulation of pre-mRNA alternative splicing. This Danio rerio (Zebrafish) protein is CUGBP Elav-like family member 3 (celf3).